The primary structure comprises 365 residues: Fructose-1,6-bisphosphatase class 1 2 (365 aa).

Mg(2+) is bound by residues glutamate 100, aspartate 122, leucine 124, and aspartate 125. Residues 125 to 128 (DGSS) and asparagine 221 each bind substrate. Glutamate 293 provides a ligand contact to Mg(2+).

Belongs to the FBPase class 1 family. As to quaternary structure, homotetramer. Mg(2+) serves as cofactor.

It localises to the cytoplasm. It catalyses the reaction beta-D-fructose 1,6-bisphosphate + H2O = beta-D-fructose 6-phosphate + phosphate. The protein operates within carbohydrate biosynthesis; gluconeogenesis. The chain is Fructose-1,6-bisphosphatase class 1 2 from Cupriavidus metallidurans (strain ATCC 43123 / DSM 2839 / NBRC 102507 / CH34) (Ralstonia metallidurans).